Consider the following 215-residue polypeptide: Ependymin-2 (215 aa).

The first 20 residues, 1 to 20, serve as a signal peptide directing secretion; it reads MHTVKLLCVVFSCLCAVAWA. N-linked (GlcNAc...) asparagine glycosylation is found at Asn-71 and Asn-94.

Belongs to the ependymin family. In terms of assembly, forms disulfide-linked dimers. In terms of processing, different glycosylation variants are known as EPD-beta and EPD-gamma. Binds calcium through the terminal sialic acids. As to expression, EPDs are synthesized in the meninx and secreted in the cerebrospinal fluid.

It is found in the secreted. Its function is as follows. May play a role in neural plasticity. May be involved during axon regeneration. In Carassius auratus (Goldfish), this protein is Ependymin-2 (epd2).